The following is a 545-amino-acid chain: Protein FAR1-RELATED SEQUENCE 9 (545 aa).

Residues 22 to 65 (LNYLKRRQLENPGFLYAIEDDCGNVFWADPTCRLNYTYFGDTLV) form the FAR1 domain. The MULE domain occupies 66 to 150 (FDTTYRRGKR…RVFSQTRLRF (85 aa)). Residues 345–381 (HTVSFDSLEVKANCSCQMFEYSGIICRHILAVFSAKN) form an SWIM-type zinc finger. A disordered region spans residues 460–495 (SNRTPGTRLPNGEAYPSEEARETANATNHPGGEKER). A coiled-coil region spans residues 492–545 (EKERTILELTAELERTGQRCEVYRANLLSILRDMEEQKFQLSLKVQNARLSLKE).

The protein belongs to the FHY3/FAR1 family. As to expression, expressed in hypocotyls, rosette and cauline leaves, inflorescences stems, flowers and siliques.

The protein localises to the nucleus. Its function is as follows. Putative transcription activator involved in regulating light control of development. May act as a negative regulator specific to phyB signaling. The sequence is that of Protein FAR1-RELATED SEQUENCE 9 (FRS9) from Arabidopsis thaliana (Mouse-ear cress).